The sequence spans 455 residues: Protein FAM124B (455 aa).

Serine 49 is subject to Phosphoserine. The tract at residues 270–322 is disordered; the sequence is TSVSAKRTSEPRSQRNQGKRSQGHSLELPEPSGSPTSDRCAGTSWKSPGRSFQ. The segment covering 313-322 has biased composition (polar residues); sequence SWKSPGRSFQ.

This sequence belongs to the FAM124 family. As to quaternary structure, interacts with CHD7 and CHD8.

The protein localises to the nucleus. The sequence is that of Protein FAM124B (FAM124B) from Homo sapiens (Human).